We begin with the raw amino-acid sequence, 367 residues long: Sigma54-dependent transcriptional regulator SfnR (367 aa).

The region spanning 21 to 250 is the Sigma-54 factor interaction domain; sequence QVFEDPKSQA…LENVIHHTLL (230 aa). Residues 49–56 and 112–121 each bind ATP; these read GETGTGKE and ADGGTLFLDE.

Involved in the dimethyl sulfide degradation pathway. Activates the expression of sfnG and sfnF. The protein is Sigma54-dependent transcriptional regulator SfnR of Pseudomonas fluorescens (strain Pf0-1).